The chain runs to 251 residues: MPRYKLTVEYDGTPYVGWQRQENGHAVQGAIEQAFKKFCGEDLTLSAAGRTDAGVHATAQVAHVDLAKDWGAGKVRDAVNAHLVMADERISILNVEKTTDTFDARFSARARHYLYRIHNRRAPLAVDYQRAWWVQKQLDADAMHEAAQRLLGEHDFTTFRATQCQAKSPVKTLDRLDVTRNGDMVEMRVSARSFLHNQVRSFAGSLMEVGVGRWTADDLQAALEARDRKACGQVAPPYGLYLVGVDYAFPF.

Asp-52 serves as the catalytic Nucleophile. Residue Tyr-113 participates in substrate binding.

This sequence belongs to the tRNA pseudouridine synthase TruA family. Homodimer.

The catalysed reaction is uridine(38/39/40) in tRNA = pseudouridine(38/39/40) in tRNA. Formation of pseudouridine at positions 38, 39 and 40 in the anticodon stem and loop of transfer RNAs. In Brucella abortus (strain 2308), this protein is tRNA pseudouridine synthase A.